The chain runs to 262 residues: Zinc import ATP-binding protein ZnuC (262 aa).

The region spanning 6 to 221 (IRLDKVAVTL…PAFVELFGKN (216 aa)) is the ABC transporter domain. 38 to 45 (GPNGAGKT) lines the ATP pocket.

It belongs to the ABC transporter superfamily. Zinc importer (TC 3.A.1.15.5) family. The complex is composed of two ATP-binding proteins (ZnuC), two transmembrane proteins (ZnuB) and a solute-binding protein (ZnuA).

Its subcellular location is the cell inner membrane. It carries out the reaction Zn(2+)(out) + ATP(in) + H2O(in) = Zn(2+)(in) + ADP(in) + phosphate(in) + H(+)(in). Part of the ABC transporter complex ZnuABC involved in zinc import. Responsible for energy coupling to the transport system. In Pseudomonas syringae pv. syringae (strain B728a), this protein is Zinc import ATP-binding protein ZnuC.